An 87-amino-acid chain; its full sequence is Protein anon-73B1 (87 aa).

Residues Leu25–Leu47 traverse the membrane as a helical segment. The tract at residues Asn50 to Arg87 is disordered. Residues Val63 to Arg72 are compositionally biased toward basic and acidic residues. The span at Thr73 to Arg87 shows a compositional bias: basic residues.

Belongs to the UPF0239 family.

The protein localises to the membrane. This Drosophila simulans (Fruit fly) protein is Protein anon-73B1 (anon-73B1).